The chain runs to 776 residues: Protein translocase subunit SecA 2 (776 aa).

ATP contacts are provided by residues glutamine 80, glycine 98–threonine 102, and aspartate 486.

Belongs to the SecA family. In terms of assembly, monomer and homodimer. Part of the essential Sec protein translocation apparatus which comprises SecA, SecYEG and auxiliary proteins SecDF. Other proteins may also be involved.

It is found in the cell membrane. The protein resides in the cytoplasm. It catalyses the reaction ATP + H2O + cellular proteinSide 1 = ADP + phosphate + cellular proteinSide 2.. Its function is as follows. Part of the Sec protein translocase complex. Interacts with the SecYEG preprotein conducting channel. Has a central role in coupling the hydrolysis of ATP to the transfer of proteins into and across the cell membrane, serving as an ATP-driven molecular motor driving the stepwise translocation of polypeptide chains across the membrane. This Listeria monocytogenes serotype 1/2a (strain 10403S) protein is Protein translocase subunit SecA 2.